We begin with the raw amino-acid sequence, 124 residues long: Protein ApaG (124 aa).

The ApaG domain occupies 1–124 (MSRYELTVQV…FALAMPRMLH (124 aa)).

This is Protein ApaG from Ralstonia nicotianae (strain ATCC BAA-1114 / GMI1000) (Ralstonia solanacearum).